A 749-amino-acid chain; its full sequence is MASIDPYQHIIVEHQYSHRFTVTVIKATNVTKGTFGDMLDTPDPYVELYISSAPDSRKRTKHFNNNINPVWNETFEFILDPNQDNVLEITLMDANYVMDESLGTTTFPILSVKPGEKKQVPFTFNKVTEMILEFSLEVCSSTDLRFSMALCDQEKLFRQKRKNKVINGLRKLLGPEKTQDLNSTSRDVPVIAVLGSGGGFRAMIGFSGVMKALYESGVLDCATYVAGLSGSTWYMSTLYSHPDFPTKGPKEINKELMHNVSYNPLLLLTPQKVKRYVEALWKKKSSGQPVTFTDIFAMLIGETLIKDRMNRKLSHMQEKINDGQCPLPLFTCLHVKPDVSELMFADWVEFSPYEIGMAKYGTFMPPGLFGSKFFMGTVIKKYEENPLHFFMGVWGSAFSILINRVLGVSNNSKGSTMEEEIENLKPKHILGNDSSDSDDEMQEPKGTENAKAEEEYLRNNQASWVQRMLMAILGDSAIFNTREGRAGKVHNFMLGLNLNTSYPYSPLSGLCTQQSMEEDELDAAVADPDEFEQIYEPLDVKSKKIHIVDSGLTFNLPYPLILRPQRGVDLIISFDFSARPSDSSPPFKELLLAEKWARMNKLPFPKIDPHVFDREGLKECYIFKPKNTSVEKDCPTVIHFVLANLQFRNFKAPGVPRETTEEKESADFDIFDDPETPFSTFNFQYPNVAFKQLHDLMEFNTLNNINVIKQAMVESIEYRRQHPSRCSVSLNDVESRKLHHKDSQSKFQM.

A C2 domain is found at 1-124 (MASIDPYQHI…GEKKQVPFTF (124 aa)). Residues 1 to 178 (MASIDPYQHI…LRKLLGPEKT (178 aa)) are phospholipid binding. The Ca(2+) site is built by aspartate 40, threonine 41, aspartate 43, asparagine 65, aspartate 93, alanine 94, and asparagine 95. Residues 138–740 (VCSSTDLRFS…NDVESRKLHH (603 aa)) enclose the PLA2c domain. The Nucleophile role is filled by serine 229. The disordered stretch occupies residues 428-452 (HILGNDSSDSDDEMQEPKGTENAKA). The span at 442–452 (QEPKGTENAKA) shows a compositional bias: basic and acidic residues. Aspartate 549 (proton acceptor) is an active-site residue. The disordered stretch occupies residues 729 to 749 (SLNDVESRKLHHKDSQSKFQM). The segment covering 733-749 (VESRKLHHKDSQSKFQM) has biased composition (basic and acidic residues).

It is found in the cytoplasm. The protein resides in the cytoplasmic vesicle. The enzyme catalyses a 1,2-diacyl-sn-glycero-3-phosphocholine + H2O = a 1-acyl-sn-glycero-3-phosphocholine + a fatty acid + H(+). It carries out the reaction a 1-acyl-sn-glycero-3-phosphocholine + H2O = sn-glycerol 3-phosphocholine + a fatty acid + H(+). With respect to regulation, stimulated by agonists such as ATP, EGF, thrombin and bradykinin as well as by cytosolic Ca(2+). Functionally, selectively hydrolyzes arachidonyl phospholipids in the sn-2 position releasing arachidonic acid. Together with its lysophospholipid activity, it is implicated in the initiation of the inflammatory response. This chain is Cytosolic phospholipase A2 (pla2g4a), found in Xenopus laevis (African clawed frog).